The following is a 321-amino-acid chain: Ferredoxin--NADP reductase (321 aa).

Asp28, Gln36, Tyr41, Ala81, Phe115, Asp274, and Ser315 together coordinate FAD.

It belongs to the ferredoxin--NADP reductase type 2 family. As to quaternary structure, homodimer. The cofactor is FAD.

The enzyme catalyses 2 reduced [2Fe-2S]-[ferredoxin] + NADP(+) + H(+) = 2 oxidized [2Fe-2S]-[ferredoxin] + NADPH. The sequence is that of Ferredoxin--NADP reductase from Frankia alni (strain DSM 45986 / CECT 9034 / ACN14a).